Reading from the N-terminus, the 82-residue chain is Cell division topological specificity factor (82 aa).

It belongs to the MinE family.

In terms of biological role, prevents the cell division inhibition by proteins MinC and MinD at internal division sites while permitting inhibition at polar sites. This ensures cell division at the proper site by restricting the formation of a division septum at the midpoint of the long axis of the cell. In Hahella chejuensis (strain KCTC 2396), this protein is Cell division topological specificity factor.